A 336-amino-acid chain; its full sequence is Fimbrial adhesin PapGII (336 aa).

The signal sequence occupies residues 1–20; sequence MKKWFPALLFSLCVSGESSA. 2 disulfides stabilise this stretch: C64/C138 and C217/C249. D-galactose contacts are provided by residues E79 and 124–127; that span reads GYKW.

The protein belongs to the adhesin PapG family.

The protein resides in the secreted. Its subcellular location is the fimbrium. Functionally, tip adhesin component of type P pili that plays a critical role in kidney infection through targeted interaction with the globoseries glycolipids containing the Gal-alpha(1-4)-Gal disaccharide present on uroepithelial cells. In turn, transcriptionally regulates host gene expression in kidney cells, leading to inflammatory pathway activation and renal tissue damage. Acts thereby as key determinant of invasive uropathogenic E.coli (UPEC), which cause pyelonephritis and urinary-source bacteremia. This is Fimbrial adhesin PapGII from Escherichia coli.